Reading from the N-terminus, the 613-residue chain is Dihydroxy-acid dehydratase (613 aa).

Aspartate 81 contacts Mg(2+). Residue cysteine 122 participates in [2Fe-2S] cluster binding. Aspartate 123 and lysine 124 together coordinate Mg(2+). Lysine 124 is subject to N6-carboxylysine. Cysteine 195 serves as a coordination point for [2Fe-2S] cluster. A Mg(2+)-binding site is contributed by glutamate 491. Serine 517 (proton acceptor) is an active-site residue.

The protein belongs to the IlvD/Edd family. As to quaternary structure, homodimer. It depends on [2Fe-2S] cluster as a cofactor. Requires Mg(2+) as cofactor.

The catalysed reaction is (2R)-2,3-dihydroxy-3-methylbutanoate = 3-methyl-2-oxobutanoate + H2O. It carries out the reaction (2R,3R)-2,3-dihydroxy-3-methylpentanoate = (S)-3-methyl-2-oxopentanoate + H2O. Its pathway is amino-acid biosynthesis; L-isoleucine biosynthesis; L-isoleucine from 2-oxobutanoate: step 3/4. It participates in amino-acid biosynthesis; L-valine biosynthesis; L-valine from pyruvate: step 3/4. Its function is as follows. Functions in the biosynthesis of branched-chain amino acids. Catalyzes the dehydration of (2R,3R)-2,3-dihydroxy-3-methylpentanoate (2,3-dihydroxy-3-methylvalerate) into 2-oxo-3-methylpentanoate (2-oxo-3-methylvalerate) and of (2R)-2,3-dihydroxy-3-methylbutanoate (2,3-dihydroxyisovalerate) into 2-oxo-3-methylbutanoate (2-oxoisovalerate), the penultimate precursor to L-isoleucine and L-valine, respectively. The polypeptide is Dihydroxy-acid dehydratase (Vibrio vulnificus (strain CMCP6)).